The primary structure comprises 322 residues: Thioredoxin reductase (322 aa).

FAD contacts are provided by residues serine 12–alanine 15, glutamate 34–alanine 42, asparagine 51, and valine 84. Cysteine 136 and cysteine 139 are disulfide-bonded. The NADP(+) site is built by histidine 176, arginine 182, isoleucine 239, and tyrosine 259. FAD is bound by residues aspartate 279 and arginine 286 to isoleucine 289. Arginine 286 lines the NADP(+) pocket.

It belongs to the class-II pyridine nucleotide-disulfide oxidoreductase family. As to quaternary structure, homodimer. It depends on FAD as a cofactor.

The protein localises to the cytoplasm. It catalyses the reaction [thioredoxin]-dithiol + NADP(+) = [thioredoxin]-disulfide + NADPH + H(+). This Streptomyces coelicolor (strain ATCC BAA-471 / A3(2) / M145) protein is Thioredoxin reductase.